We begin with the raw amino-acid sequence, 594 residues long: Pentatricopeptide repeat-containing protein At1g15480, mitochondrial (594 aa).

A mitochondrion-targeting transit peptide spans 1 to 67 (MFALSKVLRR…WSSSTGRRSL (67 aa)). The segment covering 62 to 75 (TGRRSLSSDAGAKT) has biased composition (low complexity). Residues 62-109 (TGRRSLSSDAGAKTTGDDDDLEDKNVDLATPDETSSDSEDGEEFSGDE) form a disordered region. The span at 95–109 (TSSDSEDGEEFSGDE) shows a compositional bias: acidic residues. 7 PPR repeats span residues 226 to 260 (GELV…GFPL), 261 to 294 (STFT…NLKP), 295 to 329 (NLNT…GVEL), 330 to 364 (DLRA…SLEE), 432 to 466 (SSNV…GCNI), 467 to 502 (GALT…QIKP), and 503 to 537 (LMSS…GYQS).

Belongs to the PPR family. P subfamily.

It is found in the mitochondrion. In Arabidopsis thaliana (Mouse-ear cress), this protein is Pentatricopeptide repeat-containing protein At1g15480, mitochondrial.